The chain runs to 2241 residues: Large tegument protein deneddylase (2241 aa).

Residues 1 to 238 (MKVTQASCHQ…IDLTGVVRES (238 aa)) are deubiquitination activity. Positions 4-226 (TQASCHQGDI…AARLVSTYRD (223 aa)) constitute a Peptidase C76 domain. Catalysis depends on residues cysteine 24, aspartate 160, and histidine 162. The interval 239-314 (ADTAATTTTA…STTSKTLATA (76 aa)) is disordered. The segment covering 240–250 (DTAATTTTAAP) has biased composition (low complexity). The span at 251 to 268 (SLPPLPDPIVDPGCPPGV) shows a compositional bias: pro residues. The span at 304 to 314 (PSTTSKTLATA) shows a compositional bias: low complexity. The tract at residues 327-331 (SSAVP) is interaction with inner tegument protein. Disordered regions lie at residues 1187–1230 (MTET…PPAD) and 2118–2152 (PIARVQQPPRRHRHRAAAAADDDGQIDHAQDDTSR). Composition is skewed to basic and acidic residues over residues 1190–1199 (TSERLDRSLR) and 2142–2152 (QIDHAQDDTSR).

It belongs to the herpesviridae large tegument protein family. As to quaternary structure, interacts with host CUL1 and CUL4A; these interactions inhibit the E3 ligase activity of cullins. Interacts with inner tegument protein. Interacts with capsid vertex specific component CVC2. Interacts with the major capsid protein/MCP.

It localises to the virion tegument. The protein resides in the host cytoplasm. It is found in the host nucleus. The catalysed reaction is Thiol-dependent hydrolysis of ester, thioester, amide, peptide and isopeptide bonds formed by the C-terminal Gly of ubiquitin (a 76-residue protein attached to proteins as an intracellular targeting signal).. Its function is as follows. Large tegument protein that plays multiple roles in the viral cycle. During viral entry, remains associated with the capsid while most of the tegument is detached and participates in the capsid transport toward the host nucleus. Plays a role in the routing of the capsid at the nuclear pore complex and subsequent uncoating. Within the host nucleus, acts as a deneddylase and promotes the degradation of nuclear CRLs (cullin-RING ubiquitin ligases) and thereby stabilizes nuclear CRL substrates, while cytoplasmic CRLs remain unaffected. These modifications prevent host cell cycle S-phase progression and create a favorable environment allowing efficient viral genome replication. Participates later in the secondary envelopment of capsids. Indeed, plays a linker role for the association of the outer viral tegument to the capsids together with the inner tegument protein. The protein is Large tegument protein deneddylase (UL48) of Homo sapiens (Human).